The following is a 106-amino-acid chain: NADH-quinone oxidoreductase subunit K (106 aa).

3 helical membrane-spanning segments follow: residues 9-29 (LGHY…GIFL), 35-55 (IVML…MVAF), and 70-90 (FILT…VIYF).

The protein belongs to the complex I subunit 4L family. In terms of assembly, NDH-1 is composed of 14 different subunits. Subunits NuoA, H, J, K, L, M, N constitute the membrane sector of the complex.

It is found in the cell inner membrane. It carries out the reaction a quinone + NADH + 5 H(+)(in) = a quinol + NAD(+) + 4 H(+)(out). NDH-1 shuttles electrons from NADH, via FMN and iron-sulfur (Fe-S) centers, to quinones in the respiratory chain. The immediate electron acceptor for the enzyme in this species is believed to be ubiquinone. Couples the redox reaction to proton translocation (for every two electrons transferred, four hydrogen ions are translocated across the cytoplasmic membrane), and thus conserves the redox energy in a proton gradient. In Granulibacter bethesdensis (strain ATCC BAA-1260 / CGDNIH1), this protein is NADH-quinone oxidoreductase subunit K.